Consider the following 303-residue polypeptide: Aliphatic sulfonates import ATP-binding protein SsuB (303 aa).

The region spanning 39-263 (LHVRQVVKRY…ERGAAGFAQL (225 aa)) is the ABC transporter domain. 71 to 78 (GRSGCGKS) contributes to the ATP binding site.

This sequence belongs to the ABC transporter superfamily. Aliphatic sulfonates importer (TC 3.A.1.17.2) family. The complex is composed of two ATP-binding proteins (SsuB), two transmembrane proteins (SsuC) and a solute-binding protein (SsuA).

Its subcellular location is the cell inner membrane. It catalyses the reaction ATP + H2O + aliphatic sulfonate-[sulfonate-binding protein]Side 1 = ADP + phosphate + aliphatic sulfonateSide 2 + [sulfonate-binding protein]Side 1.. Part of the ABC transporter complex SsuABC involved in aliphatic sulfonates import. Responsible for energy coupling to the transport system. This is Aliphatic sulfonates import ATP-binding protein SsuB from Cupriavidus necator (strain ATCC 17699 / DSM 428 / KCTC 22496 / NCIMB 10442 / H16 / Stanier 337) (Ralstonia eutropha).